Consider the following 395-residue polypeptide: D-alanine--D-alanine ligase (395 aa).

The region spanning 172 to 391 (KVVLGAAGIP…YTELITRLIE (220 aa)) is the ATP-grasp domain. 204–266 (DAGLTYPLFI…EQGIDGREIE (63 aa)) serves as a coordination point for ATP. Residues D345, E358, and N360 each contribute to the Mg(2+) site.

The protein belongs to the D-alanine--D-alanine ligase family. It depends on Mg(2+) as a cofactor. Mn(2+) is required as a cofactor.

The protein resides in the cytoplasm. It carries out the reaction 2 D-alanine + ATP = D-alanyl-D-alanine + ADP + phosphate + H(+). Its pathway is cell wall biogenesis; peptidoglycan biosynthesis. Its function is as follows. Cell wall formation. The protein is D-alanine--D-alanine ligase of Bifidobacterium longum subsp. infantis (strain ATCC 15697 / DSM 20088 / JCM 1222 / NCTC 11817 / S12).